The following is a 340-amino-acid chain: Ribonucleoside-diphosphate reductase subunit beta (340 aa).

2 residues coordinate Fe cation: D88 and H122. Residue Y126 is part of the active site. H216 provides a ligand contact to Fe cation.

Belongs to the ribonucleoside diphosphate reductase small chain family. In terms of assembly, tetramer of two alpha and two beta subunits. Fe cation is required as a cofactor.

It catalyses the reaction a 2'-deoxyribonucleoside 5'-diphosphate + [thioredoxin]-disulfide + H2O = a ribonucleoside 5'-diphosphate + [thioredoxin]-dithiol. In terms of biological role, provides the precursors necessary for DNA synthesis. Catalyzes the biosynthesis of deoxyribonucleotides from the corresponding ribonucleotides. The sequence is that of Ribonucleoside-diphosphate reductase subunit beta (nrdF) from Mycoplasma genitalium (strain ATCC 33530 / DSM 19775 / NCTC 10195 / G37) (Mycoplasmoides genitalium).